Consider the following 209-residue polypeptide: Uracil phosphoribosyltransferase (209 aa).

Residues R79, R104, and D131 to S139 each bind 5-phospho-alpha-D-ribose 1-diphosphate. Residues I194 and G199–A201 contribute to the uracil site. A 5-phospho-alpha-D-ribose 1-diphosphate-binding site is contributed by D200.

This sequence belongs to the UPRTase family. Mg(2+) serves as cofactor.

The enzyme catalyses UMP + diphosphate = 5-phospho-alpha-D-ribose 1-diphosphate + uracil. It participates in pyrimidine metabolism; UMP biosynthesis via salvage pathway; UMP from uracil: step 1/1. Its activity is regulated as follows. Allosterically activated by GTP. In terms of biological role, catalyzes the conversion of uracil and 5-phospho-alpha-D-ribose 1-diphosphate (PRPP) to UMP and diphosphate. In Streptococcus equi subsp. zooepidemicus (strain MGCS10565), this protein is Uracil phosphoribosyltransferase.